The following is a 551-amino-acid chain: MGVQQQSELPSQTSAKYFSLREDVSTESLSDIDSQTDINNTGNSGKDYSSPPRLSLWGWYTPSQYRGNSSGVTMKNLSASEDSISLSSLDHQQQPMLMVDHSSNSDNEDGATAKDFKIDIHLKGEDEDDGSGDTRVKYNTRNSGTLRNSSNKTQTTVLNNSTTSSNNINNNNDKEINITTLGGSTNSTTKFLYSSVDQSNGSTIRYPYSPSYSDATFSILSGVVILFSIIYSLLVGPIQIMFAFLVSILVFISYICASFAANNRIYLYSITALAVGLGLTIPSFFAATGAVVLGTGRDKSTWDVELFKSDQVLMGWMWPKGQMAIFVDESTIIGPDSFIGKLSTEILQLSYISYYIWGYFMEIYILYNLWRCHLSKDPQQQKMMPIWDQRLKMFICSWISTYFIVFSINLIFPAVSPRVYIGKTLNLYNNTLEGFGFAGFVRSRIDNAAKGSFGSFPSGHIATSFAIGLSSYKILPAYGFVSTIAAILIAIATMYLRYHYFVDFLAALPVTIFCLLYGGFYTPSDFKNVFVNCFYSIKSIFQNILSKFNNK.

2 stretches are compositionally biased toward polar residues: residues 26-47 (TESL…SGKD) and 137-152 (KYNT…SSNK). Disordered stretches follow at residues 26–50 (TESL…DYSS) and 123–172 (KGED…NNNN). Residues 153–171 (TQTTVLNNSTTSSNNINNN) are compositionally biased toward low complexity. 7 helical membrane passes run 211-231 (SYSD…SIIY), 232-252 (SLLV…LVFI), 273-293 (LAVG…AVVL), 346-366 (ILQL…IYIL), 393-413 (MFIC…LIFP), 474-494 (ILPA…IATM), and 500-520 (YFVD…YGGF).

The protein belongs to the PA-phosphatase related phosphoesterase family.

The protein resides in the membrane. The polypeptide is PA-phosphatase related-family protein DDB_G0268928 (Dictyostelium discoideum (Social amoeba)).